Here is a 198-residue protein sequence, read N- to C-terminus: Glycerol-3-phosphate acyltransferase (198 aa).

5 helical membrane-spanning segments follow: residues I2–L22, L53–T73, P79–L99, V113–I133, and I152–L172.

Belongs to the PlsY family. As to quaternary structure, probably interacts with PlsX.

It localises to the cell membrane. The enzyme catalyses an acyl phosphate + sn-glycerol 3-phosphate = a 1-acyl-sn-glycero-3-phosphate + phosphate. Its pathway is lipid metabolism; phospholipid metabolism. Functionally, catalyzes the transfer of an acyl group from acyl-phosphate (acyl-PO(4)) to glycerol-3-phosphate (G3P) to form lysophosphatidic acid (LPA). This enzyme utilizes acyl-phosphate as fatty acyl donor, but not acyl-CoA or acyl-ACP. The chain is Glycerol-3-phosphate acyltransferase from Lawsonia intracellularis (strain PHE/MN1-00).